Consider the following 696-residue polypeptide: Verrucotoxin subunit beta (696 aa).

One can recognise a B30.2/SPRY domain in the interval 506–696; that stretch reads HMPGVETIKD…GCTTESQWSN (191 aa).

Belongs to the SNTX/VTX toxin family. Tetramer composed of 2 alpha and 2 beta subunits. Post-translationally, glycosylated. In terms of tissue distribution, expressed by the venom gland.

It is found in the secreted. This lethal (towards mice) toxin induces hemolytic, cytolytic and hypotensive activities. Inhibits calcium channels and may activate ATP-sensitive potassium channels in frog atrial heart muscle. In guinea-pig ventricular myocytes, it modulates calcium channel activity through the beta-adrenoceptor-cAMP-PKA pathway (ADRB). This Synanceia verrucosa (Reef stonefish) protein is Verrucotoxin subunit beta.